We begin with the raw amino-acid sequence, 131 residues long: D-ribose pyranase (131 aa).

The active-site Proton donor is the H20. Residues D28, H98, and 120 to 122 contribute to the substrate site; that span reads YAN.

It belongs to the RbsD / FucU family. RbsD subfamily. In terms of assembly, homodecamer.

The protein resides in the cytoplasm. The enzyme catalyses beta-D-ribopyranose = beta-D-ribofuranose. Its pathway is carbohydrate metabolism; D-ribose degradation; D-ribose 5-phosphate from beta-D-ribopyranose: step 1/2. In terms of biological role, catalyzes the interconversion of beta-pyran and beta-furan forms of D-ribose. This chain is D-ribose pyranase, found in Bacillus cytotoxicus (strain DSM 22905 / CIP 110041 / 391-98 / NVH 391-98).